The following is a 349-amino-acid chain: Isopentenyl-diphosphate delta-isomerase (349 aa).

6 to 7 (RK) lines the substrate pocket. Residues 62–64 (AMT), S93, and N122 contribute to the FMN site. Q152 is a binding site for substrate. Mg(2+) is bound at residue E153. FMN is bound by residues K184, T214, 258-259 (GG), and 280-281 (AG).

It belongs to the IPP isomerase type 2 family. In terms of assembly, homooctamer. Dimer of tetramers. FMN serves as cofactor. The cofactor is NADPH. Requires Mg(2+) as cofactor.

It localises to the cytoplasm. It carries out the reaction isopentenyl diphosphate = dimethylallyl diphosphate. In terms of biological role, involved in the biosynthesis of isoprenoids. Catalyzes the 1,3-allylic rearrangement of the homoallylic substrate isopentenyl (IPP) to its allylic isomer, dimethylallyl diphosphate (DMAPP). The protein is Isopentenyl-diphosphate delta-isomerase of Bacillus cereus (strain ZK / E33L).